The chain runs to 132 residues: Large ribosomal subunit protein bL12 (132 aa).

Positions 102-126 (APKPIKEATNKDDAESIKKQLEEAG) are enriched in basic and acidic residues. Positions 102 to 132 (APKPIKEATNKDDAESIKKQLEEAGAKASVK) are disordered.

This sequence belongs to the bacterial ribosomal protein bL12 family. Homodimer. Part of the ribosomal stalk of the 50S ribosomal subunit. Forms a multimeric L10(L12)X complex, where L10 forms an elongated spine to which 2 to 4 L12 dimers bind in a sequential fashion. Binds GTP-bound translation factors.

Its function is as follows. Forms part of the ribosomal stalk which helps the ribosome interact with GTP-bound translation factors. Is thus essential for accurate translation. This Rippkaea orientalis (strain PCC 8801 / RF-1) (Cyanothece sp. (strain PCC 8801)) protein is Large ribosomal subunit protein bL12.